We begin with the raw amino-acid sequence, 129 residues long: Copper chaperone GriE (129 aa).

The segment at residues 1–37 is a signal peptide (tat-type signal); that stretch reads MPMNRREMVMATTGAALAAAAAVPLLSGGEGEGAAEA. The segment at 32 to 51 is disordered; the sequence is EGAAEAAAAPAKATGRGREH. Over residues 34–45 the composition is skewed to low complexity; the sequence is AAEAAAAPAKAT.

Belongs to the melC1 family. Predicted to be exported by the Tat system. The position of the signal peptide cleavage has not been experimentally proven.

In terms of biological role, involved in the transfer of Cu(2+) ions to the apo form of o-aminophenol oxidase GriF in the grixazone biosynthetic pathway. In Streptomyces griseus subsp. griseus (strain JCM 4626 / CBS 651.72 / NBRC 13350 / KCC S-0626 / ISP 5235), this protein is Copper chaperone GriE (griE).